The primary structure comprises 219 residues: Small ribosomal subunit protein uS3 (219 aa).

Positions 38–106 constitute a KH type-2 domain; the sequence is IREYIENRLK…RVHINIFEVK (69 aa).

This sequence belongs to the universal ribosomal protein uS3 family. As to quaternary structure, part of the 30S ribosomal subunit. Forms a tight complex with proteins S10 and S14.

Binds the lower part of the 30S subunit head. Binds mRNA in the 70S ribosome, positioning it for translation. The protein is Small ribosomal subunit protein uS3 of Halalkalibacterium halodurans (strain ATCC BAA-125 / DSM 18197 / FERM 7344 / JCM 9153 / C-125) (Bacillus halodurans).